Here is a 245-residue protein sequence, read N- to C-terminus: tRNA pseudouridine synthase A (245 aa).

D52 acts as the Nucleophile in catalysis. Position 111 (Y111) interacts with substrate.

Belongs to the tRNA pseudouridine synthase TruA family. As to quaternary structure, homodimer.

It carries out the reaction uridine(38/39/40) in tRNA = pseudouridine(38/39/40) in tRNA. Formation of pseudouridine at positions 38, 39 and 40 in the anticodon stem and loop of transfer RNAs. This chain is tRNA pseudouridine synthase A, found in Wolbachia pipientis wMel.